Reading from the N-terminus, the 379-residue chain is Protein RecA (379 aa).

79–86 (GPESSGKT) is an ATP binding site.

Belongs to the RecA family.

It is found in the cytoplasm. Its function is as follows. Can catalyze the hydrolysis of ATP in the presence of single-stranded DNA, the ATP-dependent uptake of single-stranded DNA by duplex DNA, and the ATP-dependent hybridization of homologous single-stranded DNAs. It interacts with LexA causing its activation and leading to its autocatalytic cleavage. This is Protein RecA from Streptococcus uberis (strain ATCC BAA-854 / 0140J).